We begin with the raw amino-acid sequence, 79 residues long: DNA-directed RNA polymerase subunit omega (79 aa).

Belongs to the RNA polymerase subunit omega family. In terms of assembly, the RNAP catalytic core consists of 2 alpha, 1 beta, 1 beta' and 1 omega subunit. When a sigma factor is associated with the core the holoenzyme is formed, which can initiate transcription.

It catalyses the reaction RNA(n) + a ribonucleoside 5'-triphosphate = RNA(n+1) + diphosphate. Functionally, promotes RNA polymerase assembly. Latches the N- and C-terminal regions of the beta' subunit thereby facilitating its interaction with the beta and alpha subunits. The sequence is that of DNA-directed RNA polymerase subunit omega from Bdellovibrio bacteriovorus (strain ATCC 15356 / DSM 50701 / NCIMB 9529 / HD100).